The following is a 181-amino-acid chain: Probable inosine/xanthosine triphosphatase (181 aa).

Asp65 serves as a coordination point for Mg(2+).

This sequence belongs to the YjjX NTPase family. Homodimer. The cofactor is Mg(2+). Requires Mn(2+) as cofactor.

It catalyses the reaction XTP + H2O = XDP + phosphate + H(+). The enzyme catalyses ITP + H2O = IDP + phosphate + H(+). Its function is as follows. Phosphatase that hydrolyzes non-canonical purine nucleotides such as XTP and ITP to their respective diphosphate derivatives. Probably excludes non-canonical purines from DNA/RNA precursor pool, thus preventing their incorporation into DNA/RNA and avoiding chromosomal lesions. This Caldivirga maquilingensis (strain ATCC 700844 / DSM 13496 / JCM 10307 / IC-167) protein is Probable inosine/xanthosine triphosphatase.